The primary structure comprises 538 residues: Protein phosphatase EYA2 (538 aa).

The span at 209-230 shows a compositional bias: polar residues; sequence HNVPNQSSESLAGEYNTHNGPS. The disordered stretch occupies residues 209–263; that stretch reads HNVPNQSSESLAGEYNTHNGPSTPAKEGDTDRPHRASDGKLRGRSKRSSDPSPAG. Residues 234–249 are compositionally biased toward basic and acidic residues; that stretch reads KEGDTDRPHRASDGKL. The active-site Nucleophile is aspartate 274. Mg(2+)-binding residues include aspartate 274, aspartate 276, and aspartate 502. Residue aspartate 276 is the Proton donor of the active site.

It belongs to the HAD-like hydrolase superfamily. EYA family. As to quaternary structure, interacts with DACH2 and SIX1, and probably with SIX2, SIX4 and SIX5. Interacts with CAPN8. Interacts with GNAZ and GNAI2; this precludes interaction with SIX1. Mg(2+) is required as a cofactor. In terms of tissue distribution, highest expression in muscle with lower levels in kidney, placenta, pancreas, brain and heart.

The protein localises to the cytoplasm. It is found in the nucleus. It catalyses the reaction O-phospho-L-tyrosyl-[protein] + H2O = L-tyrosyl-[protein] + phosphate. In terms of biological role, functions both as protein phosphatase and as transcriptional coactivator for SIX1, and probably also for SIX2, SIX4 and SIX5. Tyrosine phosphatase that dephosphorylates 'Tyr-142' of histone H2AX (H2AXY142ph) and promotes efficient DNA repair via the recruitment of DNA repair complexes containing MDC1. 'Tyr-142' phosphorylation of histone H2AX plays a central role in DNA repair and acts as a mark that distinguishes between apoptotic and repair responses to genotoxic stress. Its function as histone phosphatase may contribute to its function in transcription regulation during organogenesis. Plays an important role in hypaxial muscle development together with SIX1 and DACH2; in this it is functionally redundant with EYA1. This chain is Protein phosphatase EYA2 (EYA2), found in Homo sapiens (Human).